The sequence spans 446 residues: Histidine--tRNA ligase (446 aa).

The protein belongs to the class-II aminoacyl-tRNA synthetase family. Homodimer.

The protein localises to the cytoplasm. It catalyses the reaction tRNA(His) + L-histidine + ATP = L-histidyl-tRNA(His) + AMP + diphosphate + H(+). The sequence is that of Histidine--tRNA ligase from Paraburkholderia phymatum (strain DSM 17167 / CIP 108236 / LMG 21445 / STM815) (Burkholderia phymatum).